The chain runs to 82 residues: Small ribosomal subunit protein bS18 (82 aa).

This sequence belongs to the bacterial ribosomal protein bS18 family. Part of the 30S ribosomal subunit. Forms a tight heterodimer with protein bS6.

Its function is as follows. Binds as a heterodimer with protein bS6 to the central domain of the 16S rRNA, where it helps stabilize the platform of the 30S subunit. The sequence is that of Small ribosomal subunit protein bS18 from Rhizobium rhizogenes (strain K84 / ATCC BAA-868) (Agrobacterium radiobacter).